Consider the following 1966-residue polypeptide: MGNTVGAPIVSEYLEDEIGPIVFKKSLGNARFLKTVKAYHSEEGYVVVKIYKKRNTKESLEKYKIMLKEIKDNFNITPSFNIMPYQHFIETDRSGYLIRQYFHNNLYDRLSTRPFLSMIEKKFIAFQLLKALEQSSFKGVFHGDIKSENVLVTTSNWVYLSDFACYKPTFIPEDNPADFSFYFDTSGRRTCYIAPERFYETNRGAPSNNELTPKMDIFSLGCVIAELFLDGFPIFDFSQLLSYRKGEYSPEPIIRQRIQDPNIQTLILHMIQKDPDQRYTPEKYISKWNTVFPQYFSFAHQFIPELMRLENDDRVMCISDKFDEIVDIFKNNSITNLFKSNLNQSTNSNTIGSFRVSTPSSPILISNNNNNNNNNNNNNNNNNNNNNNNNNNNNNNNNNQTTTTTTNTNINTTQQQQQQQQQQQQQLQRPLSKLDDIGKNIANIIYKTEQFVKESDEFDKTDITNIKELNIQTTPTINTSTINRVIQTSKTNTNLDTINENSNNNIGVNRKKVTVVEGLDLFLSVIYTAVKHCQFPSTKVKCVGSLLVRLAEMLDDECRLQKIVPYIMSMISPEQPTLVRVEALRSLAKVLEMVQTFPPSESSIFGQYILPSLSQLSHESTDEIIRIAFAEILPQLATTAKRFLEIAQHYRDPDSEGIMESRKDRAKFRVYDSDLQEVQDQFFNKVSDLLTKDSCNTLKKIILSDIYRLCVFFGRQKTNESVLPLIITFLNDRDWQLRCAFFENIVAVCTVVGAGSLESFIYPCILLALTDEEEFVTEKALSSLSELCSLGLLRKPILLELLVKTSPMLLHPNNWIRYGVVSLIVKICQSLSKADVYCYVKPKLSPFLVNLNGNGNGNAEISDTITESNLIQLLDSPISRESFNKIVKFIARNRINLSSSINSILANDNDNFNGESFNSNGSGGGGNPNLVSSTGGSNRRLRALSNKFFVPNILSASNSSINSTSGDIGSLLSQSTEESLAFLRQMTSIGISDSDQNKIIKCFDYLQSKKCKDLESANNSEGNVIVIRTNGTTIISSSNNSNNNTLSSSTTSSNSTTPTNSTVNLHSVLNNTTIIQQQQQQLQQTITQQSITQQQQQQQQQQQVSGGITTGGTTTTTLGRSSSPQLTGLNPSILSNSNNIQLSSSVVDVTKLPNSIPIRMVKIRGGDQSLNNSTVSLGSVAGGNIITPSTSLSNSNTMVGNNNNNSYNTSTSSSPLSSSVLNSSVGMNNLTNSNANSINNSSGINNNNSNNNSVNSNNYNNMNNNTMNNSVNLMNSNQIGQQQQQNPNTVKIDLVSPSDLNVVSKKYYIRDPKMGLSTILKVETNVECSIKVPLPLPDLGSTDSVLGGGLLSSGGVGGGVGGTGGGNINGVSGINGNVGGGGGGVGVGTVGSGGNGSIGGGNSGINNGSGGGGVNSGGNSGINSGSTNSSGSLYGNGNGLDNLPNSTWRPMGILVSHFFEHKAAVNEIQVSSDNLFFATASNDGTVKIWDCQRMEKSVTNRARQTYAQQEGRITSISICEKTHSIASASDKGSIHVFRVGISGKQKNGNIKYTNLSTVKNITETTRGNIVSVSHYSTNSSSVVTYATTKGGIHGWDLRSQQDAFNLVNDASLGLIQAFLIDPNRNWLVTGTSRGFLTCWDLRFGIPLYSVRVSNGRILKFAPYMLAKSASESWVYISTEQDNVIVFDLSNKKTTRVFKRSYEQPPQQQPQQPQPPQQQQQQQSQMNRSINMTSSTTTTTTSSYDFGTENLKTSSYSQLPSNPLVNSIVNNSNINNNNNNNDNSNNVTIFKPTPLVRALLNPPNCPFLITAGDDKRIKLWDWNNLPQSYYVSIGKEPPPFYTHKFSNDTSNAYEIHEEVWHDTSSSSFYSNSAMFGGGGGGQPMSTSLSSSSLSQQQHQAQLQLQYQLQQQQQQQQYINHLQQQKSKTSISMPTVHHQEPILDIKMMEVPNPMLISASTDGVVKVWK.

A Protein kinase domain is found at 21 to 303 (IVFKKSLGNA…QYFSFAHQFI (283 aa)). Residues 27–35 (LGNARFLKT) and K49 contribute to the ATP site. Residue D144 is the Proton acceptor of the active site. Residues 362–407 (PILISNNNNNNNNNNNNNNNNNNNNNNNNNNNNNNNNNQTTTTTTN) form a disordered region. Positions 367 to 407 (NNNNNNNNNNNNNNNNNNNNNNNNNNNNNNNNNQTTTTTTN) are enriched in low complexity. HEAT repeat units follow at residues 558-596 (CRLQ…MVQT), 604-642 (IFGQ…TAKR), 717-754 (KTNE…VVGA), and 756-793 (SLES…LGLL). Disordered stretches follow at residues 916–937 (SFNS…TGGS), 1036–1062 (SSSN…TNST), 1106–1130 (GGIT…TGLN), and 1190–1263 (TSLS…NNMN). Composition is skewed to low complexity over residues 1106-1119 (GGIT…TTLG) and 1192-1263 (LSNS…NNMN). 4 WD repeats span residues 1460 to 1499 (EHKA…KSVT), 1508 to 1547 (QQEG…KQKN), 1564 to 1605 (TTRG…DAFN), and 1610 to 1649 (ASLG…PLYS). The segment at 1699-1743 (RSYEQPPQQQPQQPQPPQQQQQQQSQMNRSINMTSSTTTTTTSSY) is disordered. Low complexity-rich tracts occupy residues 1703–1722 (QPPQ…QQQQ) and 1732–1742 (TSSTTTTTTSS). WD repeat units lie at residues 1790–1829 (KPTP…QSYY) and 1935–1966 (HHQE…KVWK).

Belongs to the protein kinase superfamily. Ser/Thr protein kinase family.

The enzyme catalyses L-seryl-[protein] + ATP = O-phospho-L-seryl-[protein] + ADP + H(+). The catalysed reaction is L-threonyl-[protein] + ATP = O-phospho-L-threonyl-[protein] + ADP + H(+). In Dictyostelium discoideum (Social amoeba), this protein is Probable serine/threonine-protein kinase vps15 (vps15).